The sequence spans 268 residues: Shikimate dehydrogenase (NADP(+)) (268 aa).

Threonine 62 contacts shikimate. The active-site Proton acceptor is the lysine 66. Position 78 (glutamate 78) interacts with NADP(+). Asparagine 87 and aspartate 102 together coordinate shikimate. NADP(+)-binding positions include 126 to 130 and leucine 207; that span reads GSGGI. Position 209 (tyrosine 209) interacts with shikimate. Glycine 230 provides a ligand contact to NADP(+).

It belongs to the shikimate dehydrogenase family. In terms of assembly, homodimer.

The catalysed reaction is shikimate + NADP(+) = 3-dehydroshikimate + NADPH + H(+). Its pathway is metabolic intermediate biosynthesis; chorismate biosynthesis; chorismate from D-erythrose 4-phosphate and phosphoenolpyruvate: step 4/7. Involved in the biosynthesis of the chorismate, which leads to the biosynthesis of aromatic amino acids. Catalyzes the reversible NADPH linked reduction of 3-dehydroshikimate (DHSA) to yield shikimate (SA). The protein is Shikimate dehydrogenase (NADP(+)) of Thermoplasma acidophilum (strain ATCC 25905 / DSM 1728 / JCM 9062 / NBRC 15155 / AMRC-C165).